Reading from the N-terminus, the 316-residue chain is BRCA2 and CDKN1A-interacting protein (316 aa).

The interval 1–57 (MASKAKKRAVGNGIQRPLGAPGQREEEEEEEDEVEDEEEDEDDSDEEEDEVDEIVDE) is disordered. A compositionally biased stretch (acidic residues) spans 25-57 (EEEEEEEDEVEDEEEDEDDSDEEEDEVDEIVDE). A phosphoserine mark is found at S44 and S114. The segment at 61–169 (IEFEAYSISD…EQSMVEQLDK (109 aa)) is interaction with BRCA2. An interaction with CDKN1A region spans residues 163-261 (MVEQLDKLLN…NAEEEFFYEK (99 aa)). A Phosphoserine modification is found at S283.

It belongs to the BCP1 family. As to quaternary structure, interacts with BRCA2, CDKN1A and MTDH/LYRIC. Interacts with DCTN1/p150-glued and ACTR1A/ARP1. Interacts with alpha-, beta- and gamma-tubulins. Interacts with TENT5C; the interaction has no effect on TENT5C poly(A) polymerase function. In terms of tissue distribution, expressed in the testes (at protein level).

It localises to the nucleus. The protein localises to the cytoplasm. Its subcellular location is the cytoskeleton. It is found in the microtubule organizing center. The protein resides in the centrosome. It localises to the centriole. The protein localises to the spindle pole. Its function is as follows. During interphase, required for microtubule organizing and anchoring activities. During mitosis, required for the organization and stabilization of the spindle pole. May promote cell cycle arrest by enhancing the inhibition of CDK2 activity by CDKN1A. May be required for repair of DNA damage by homologous recombination in conjunction with BRCA2. May not be involved in non-homologous end joining (NHEJ). The protein is BRCA2 and CDKN1A-interacting protein (Bccip) of Mus musculus (Mouse).